The sequence spans 347 residues: N-acetyl-gamma-glutamyl-phosphate reductase (347 aa).

The active site involves C151.

The protein belongs to the NAGSA dehydrogenase family. Type 1 subfamily.

It is found in the cytoplasm. The catalysed reaction is N-acetyl-L-glutamate 5-semialdehyde + phosphate + NADP(+) = N-acetyl-L-glutamyl 5-phosphate + NADPH + H(+). It functions in the pathway amino-acid biosynthesis; L-arginine biosynthesis; N(2)-acetyl-L-ornithine from L-glutamate: step 3/4. Functionally, catalyzes the NADPH-dependent reduction of N-acetyl-5-glutamyl phosphate to yield N-acetyl-L-glutamate 5-semialdehyde. In Pelotomaculum thermopropionicum (strain DSM 13744 / JCM 10971 / SI), this protein is N-acetyl-gamma-glutamyl-phosphate reductase.